The following is a 419-amino-acid chain: Histidine--tRNA ligase (419 aa).

The protein belongs to the class-II aminoacyl-tRNA synthetase family. In terms of assembly, homodimer.

It is found in the cytoplasm. It catalyses the reaction tRNA(His) + L-histidine + ATP = L-histidyl-tRNA(His) + AMP + diphosphate + H(+). In Mycoplasmoides gallisepticum (strain R(low / passage 15 / clone 2)) (Mycoplasma gallisepticum), this protein is Histidine--tRNA ligase.